A 358-amino-acid polypeptide reads, in one-letter code: Chondroadherin (358 aa).

The first 20 residues, 1-20 (MARALLFSLVFLAILLPALA), serve as a signal peptide directing secretion. Residues 21–50 (ACPQNCHCHGDLQHVICDKVGLQKIPKVSE) form the LRRNT domain. C22 and C37 are oxidised to a cystine. 10 LRR repeats span residues 51–72 (TTKLLNLQRNNFPVLAANSFRT), 75–96 (NLVSLHLQHCNIREVAAGAFRG), 99–120 (QLIYLYLSHNDIRVLRAGAFDD), 123–144 (ELTYLYLDHNKVSELPRGLLSP), 147–168 (NLFILQLNNNKIRELRAGAFQG), 171–192 (DLRWLYLSENALSSLQPGSLDD), 195–216 (NLAKFHLDKNQLSSYPSAALSK), 219–240 (VVEELKLSHNPLKSIPDNAFQS), 244–265 (YLETLWLDNTNLEKFSDAAFSG), and 268–289 (TLKHVHLDNNRLNQLPSSFPFD). O-linked (GalNAc...) serine glycosylation occurs at S143. Residues 299–347 (NPWKCTCQLRGLRRWLEAKASRPDATCSSPAKFKGQRIRDTDALRSCKS) enclose the LRRCT domain. 2 cysteine pairs are disulfide-bonded: C303–C345 and C305–C325. The interval 322-358 (DATCSSPAKFKGQRIRDTDALRSCKSPTKRSKKAGRH) is disordered. Positions 348 to 358 (PTKRSKKAGRH) are enriched in basic residues.

It belongs to the small leucine-rich proteoglycan (SLRP) family. SLRP class IV subfamily. Mostly monomeric. Interacts with collagen type II. Cartilage.

It localises to the secreted. Its subcellular location is the extracellular space. It is found in the extracellular matrix. Functionally, promotes attachment of chondrocytes, fibroblasts, and osteoblasts. This binding is mediated (at least for chondrocytes and fibroblasts) by the integrin alpha(2)beta(1). May play an important role in the regulation of chondrocyte growth and proliferation. The chain is Chondroadherin (Chad) from Mus musculus (Mouse).